The chain runs to 272 residues: Ribonuclease HII (272 aa).

The 186-residue stretch at Lys-87–Leu-272 folds into the RNase H type-2 domain. 3 residues coordinate a divalent metal cation: Asp-93, Glu-94, and Asp-188.

It belongs to the RNase HII family. Mn(2+) serves as cofactor. It depends on Mg(2+) as a cofactor.

It is found in the cytoplasm. The catalysed reaction is Endonucleolytic cleavage to 5'-phosphomonoester.. Endonuclease that specifically degrades the RNA of RNA-DNA hybrids. This is Ribonuclease HII from Clostridium perfringens (strain 13 / Type A).